The sequence spans 559 residues: Protein pp71 (559 aa).

An S-nitrosocysteine; by host modification is found at cysteine 218. A Phosphothreonine modification is found at threonine 223. Disordered stretches follow at residues 404 to 440 and 530 to 559; these read EFLPQSPGLPPTEEEEEEEEEDDEDDLSSTPTPTPLS and SSTLRSVPAPRPSPISTASTSSTPRSRPRI. Over residues 415-430 the composition is skewed to acidic residues; it reads TEEEEEEEEEDDEDDL. 2 stretches are compositionally biased toward low complexity: residues 431-440 and 543-559; these read SSTPTPTPLS and PISTASTSSTPRSRPRI.

The protein belongs to the herpesviridae pp71 family. In terms of assembly, interacts with the host protein DAXX; this interaction takes place at ND10 and induces the reversal of DAXX-mediated repression of viral transcription. Interacts with UL35. Interacts with host TMEM173/STING1; this interaction inhibits the cGAS/STING pathway. Interacts with host RB1; this interaction mediates RB1 proteasomal degradation. In terms of processing, S-nitrosylation limits ability to undermine the cGAS/STING antiviral pathway.

The protein resides in the virion tegument. Its subcellular location is the host nucleus. It localises to the host endoplasmic reticulum. In terms of biological role, stimulates viral immediate-early (IE) transcription. Plays a role in the inhibition of the host innate repsonse by targeting STING1 and thus the cGAS-STING pathway. Also counteracts host DAXX-mediated repression of viral transcription. Displaces a DAXX-binding protein, ATRX, from nuclear domain 10 sites (ND10) shortly after infection. Increases the basal level of SUMOylated DAXX in infected cells. Stimulates quiescent cells to re-enter the cell cycle, proceed through G1 and enter the S phase. Interacts with hypophosphorylated forms of RB1 and induces their degradation by the proteasome without involving ubiquitin conjugation. In Human cytomegalovirus (strain AD169) (HHV-5), this protein is Protein pp71 (UL82).